The chain runs to 75 residues: Large ribosomal subunit protein bL31 (75 aa).

Belongs to the bacterial ribosomal protein bL31 family. Type A subfamily. In terms of assembly, part of the 50S ribosomal subunit.

Functionally, binds the 23S rRNA. The polypeptide is Large ribosomal subunit protein bL31 (Acidiphilium cryptum (strain JF-5)).